The sequence spans 181 residues: Large ribosomal subunit protein uL22 (181 aa).

The segment at 157–181 (PEAAKKPGKKTSAVEKSKKATAATH) is disordered.

This sequence belongs to the universal ribosomal protein uL22 family.

This is Large ribosomal subunit protein uL22 (RpL17) from Biphyllus lunatus (Beetle).